A 489-amino-acid polypeptide reads, in one-letter code: Rhamnulokinase (489 aa).

Residue 13–17 (ASSGR) coordinates ATP. A disulfide bridge connects residues cysteine 68 and cysteine 222. Residues glycine 83 and 236-238 (HDT) contribute to the substrate site. The active-site Proton acceptor is the aspartate 237. Threonine 259 lines the ATP pocket. Asparagine 296 is a substrate binding site. Position 304 (glutamine 304) interacts with ATP. Cysteine 353 and cysteine 370 are disulfide-bonded. Position 402 (glycine 402) interacts with ATP. An intrachain disulfide couples cysteine 413 to cysteine 417.

It belongs to the rhamnulokinase family. Requires Mg(2+) as cofactor.

It carries out the reaction L-rhamnulose + ATP = L-rhamnulose 1-phosphate + ADP + H(+). It functions in the pathway carbohydrate degradation; L-rhamnose degradation; glycerone phosphate from L-rhamnose: step 2/3. In terms of biological role, involved in the catabolism of L-rhamnose (6-deoxy-L-mannose). Catalyzes the transfer of the gamma-phosphate group from ATP to the 1-hydroxyl group of L-rhamnulose to yield L-rhamnulose 1-phosphate. This is Rhamnulokinase from Shigella sonnei (strain Ss046).